A 292-amino-acid chain; its full sequence is Phosphatidylglycerol--prolipoprotein diacylglyceryl transferase (292 aa).

3 consecutive transmembrane segments (helical) span residues 18–38 (LFGV…GLLI), 67–87 (LLTW…VLFY), and 105–125 (GGMS…AFCL). Arg150 contributes to the a 1,2-diacyl-sn-glycero-3-phospho-(1'-sn-glycerol) binding site. 3 consecutive transmembrane segments (helical) span residues 193-213 (QIYE…LLVW), 222-242 (GSVS…VEFV), and 266-286 (GLTM…YLIL).

The protein belongs to the Lgt family.

It localises to the cell inner membrane. The enzyme catalyses L-cysteinyl-[prolipoprotein] + a 1,2-diacyl-sn-glycero-3-phospho-(1'-sn-glycerol) = an S-1,2-diacyl-sn-glyceryl-L-cysteinyl-[prolipoprotein] + sn-glycerol 1-phosphate + H(+). The protein operates within protein modification; lipoprotein biosynthesis (diacylglyceryl transfer). Catalyzes the transfer of the diacylglyceryl group from phosphatidylglycerol to the sulfhydryl group of the N-terminal cysteine of a prolipoprotein, the first step in the formation of mature lipoproteins. The chain is Phosphatidylglycerol--prolipoprotein diacylglyceryl transferase from Cereibacter sphaeroides (strain ATCC 17023 / DSM 158 / JCM 6121 / CCUG 31486 / LMG 2827 / NBRC 12203 / NCIMB 8253 / ATH 2.4.1.) (Rhodobacter sphaeroides).